The following is a 1507-amino-acid chain: Histone-lysine N-methyltransferase set-2 (1507 aa).

The disordered stretch occupies residues 1-32 (MSTHDMNHHPPRKSHSKRDKPSSSNSGPKIEN). Over residues 9 to 18 (HPPRKSHSKR) the composition is skewed to basic residues. One can recognise an RRM domain in the interval 128-199 (VSLFNMDDNC…QNLLATKCTP (72 aa)). Disordered regions lie at residues 280-578 (DYTM…QPQM), 650-697 (EPFS…EEPA), 803-826 (DEEK…SNHL), 842-1058 (SSRG…GPII), and 1163-1199 (QKPR…FKPR). Over residues 296-315 (PIPPPPIKEESPPPPPPPPV) the composition is skewed to pro residues. The segment covering 316-327 (ASVSNLAPVPSV) has biased composition (low complexity). Positions 331–342 (YYNNIQPSSSTM) are enriched in polar residues. Positions 413-444 (VKYETYKMEKRKIKYEGGNKKYEQVHIKERTA) are enriched in basic and acidic residues. The segment covering 456–465 (SSESASGSSS) has biased composition (low complexity). The span at 478–488 (KKKKRPKSPNR) shows a compositional bias: basic residues. Polar residues predominate over residues 566 to 575 (HLQTPYQHVQ). Basic and acidic residues-rich tracts occupy residues 668–680 (DVGR…KPSL) and 803–823 (DEEK…EKPS). Basic residues predominate over residues 846-868 (FYRKQKPIPKSHPKHQEHHHHAK). Residues 869 to 908 (ASVSTPVHSSSTSRNSSVAPTPQRTVSTSSSSSSAATSAR) are compositionally biased toward low complexity. Over residues 941–951 (SFSSTSIQSSP) the composition is skewed to polar residues. A compositionally biased stretch (low complexity) spans 958-971 (SSSSRTSSSSSTSS). Positions 973–982 (KQEETADEKS) are enriched in basic and acidic residues. The segment covering 990-1007 (SSDESSTTGSTATSVVSS) has biased composition (low complexity). The span at 1015–1047 (QQEKTDGEPPKKKSQTDFISERVSKIEGEERPL) shows a compositional bias: basic and acidic residues. Positions 1179 to 1190 (EPPPTKRPAPPP) are enriched in pro residues. The short motif at 1340–1345 (RLLQRR) is the RxxxRR motif element. Residues 1368 to 1485 (KMIKFARSRI…KGEEITYDYK (118 aa)) form the SET domain. Y1484 serves as a coordination point for S-adenosyl-L-methionine. In terms of domain architecture, Post-SET spans 1491–1507 (DKIDCLCGAKTCRGYLN).

It belongs to the class V-like SAM-binding methyltransferase superfamily. Component of the Set1C/COMPASS complex (also known as the SET2 complex), which contains at least set-2, swd-2.1, cfp-1, rbbp-5, wdr-5.1, dpy-30 and ash-2. As to expression, expressed in all cells of embryo. In L1 larva, it is predominantly expressed in Z2 and Z3 primordial germ cells. In adults, it is predominantly expressed in the germline.

The protein localises to the nucleus. The catalysed reaction is L-lysyl(4)-[histone H3] + 3 S-adenosyl-L-methionine = N(6),N(6),N(6)-trimethyl-L-lysyl(4)-[histone H3] + 3 S-adenosyl-L-homocysteine + 3 H(+). It carries out the reaction N(6)-methyl-L-lysyl(4)-[histone H3] + S-adenosyl-L-methionine = N(6),N(6)-dimethyl-L-lysyl(4)-[histone H3] + S-adenosyl-L-homocysteine + H(+). It catalyses the reaction N(6),N(6)-dimethyl-L-lysyl(4)-[histone H3] + S-adenosyl-L-methionine = N(6),N(6),N(6)-trimethyl-L-lysyl(4)-[histone H3] + S-adenosyl-L-homocysteine + H(+). Catalytic component of the COMPASS (Set1C) complex that specifically mono-, di- and trimethylates histone H3 to form H3K4me1/2/3. Binds RNAs which might negatively affect its histone methyltransferase activity. COMPASS recognizes ubiquitinated H2B on one face of the nucleosome which stimulates the methylation of H3 on the opposing face. H3 'Lys-4' methylation represents a specific tag for epigenetic transcriptional activation. Implicated in the epigenetic inheritance of lifespan over several generations. Acts in the germline to limit the longevity of the soma, probably by regulating a lipid metabolism pathway that signals from the germline to the intestine, thereby preventing accumulation of mono-unsaturated fatty acids. Methylation in the germline is required for germline development and fertility, possibly by ensuring genome stability. May act redundantly with mes-3 and mes-4 proteins in the development of a fertile germline. Required for RNAi. Functions as an antagonist of hpl-1 and hpl-2 activity in growth and somatic gonad development. Cooperates with jmjd-3.1 and egl-27 to ensure robust transdifferentiation of the Y rectal cell to the PDA motor neuron during larval development. This chain is Histone-lysine N-methyltransferase set-2 (set-2), found in Caenorhabditis elegans.